A 1019-amino-acid polypeptide reads, in one-letter code: Enteropeptidase (1019 aa).

Glycine 2 carries N-myristoyl glycine lipidation. Topologically, residues 2–18 (GSKRGISSRHHSLSSYE) are cytoplasmic. Residues 19-47 (IMFAALFAILVVLCAGLIAVSCLTIKESQ) form a helical; Signal-anchor for type II membrane protein membrane-spanning segment. Residues 48-1019 (RGAALGQSHE…FTEWIQSFLH (972 aa)) are Extracellular-facing. An SEA domain is found at 54–169 (QSHEARATFK…NSVDILDKLT (116 aa)). N-linked (GlcNAc...) asparagine glycans are attached at residues asparagine 116, asparagine 147, and asparagine 179. Residues 182–223 (IECLPGSSPCTDALTCIKADLFCDGEVNCPDGSDEDNKMCAT) form the LDL-receptor class A 1 domain. 4 disulfide bridges follow: cysteine 184–cysteine 197, cysteine 191–cysteine 210, cysteine 204–cysteine 221, and cysteine 225–cysteine 253. One can recognise a CUB 1 domain in the interval 225-334 (CDGRFLLTGS…VGFNATYTAF (110 aa)). Asparagine 328, asparagine 335, asparagine 388, asparagine 440, asparagine 470, asparagine 503, asparagine 534, and asparagine 630 each carry an N-linked (GlcNAc...) asparagine glycan. An MAM domain is found at 342–504 (YEKINCNFED…ISLTYGICNG (163 aa)). Cysteine 524 and cysteine 552 form a disulfide bridge. The 111-residue stretch at 524 to 634 (CGGPFELWEP…GGFKANFTTG (111 aa)) folds into the CUB 2 domain. In terms of domain architecture, LDL-receptor class A 2 spans 641 to 679 (EPCKADHFQCKNGECVPLVNLCDGHLHCEDGSDEADCVR). 3 disulfides stabilise this stretch: cysteine 643-cysteine 655, cysteine 650-cysteine 668, and cysteine 662-cysteine 677. The region spanning 678 to 771 (VRFFNGTTNN…LIRLQCNHKS (94 aa)) is the SRCR domain. N-linked (GlcNAc...) asparagine glycans are attached at residues asparagine 682, asparagine 706, and asparagine 725. Intrachain disulfides connect cysteine 757/cysteine 767, cysteine 772/cysteine 896, and cysteine 810/cysteine 826. In terms of domain architecture, Peptidase S1 spans 785–1019 (IVGGSNAKEG…FTEWIQSFLH (235 aa)). The Charge relay system role is filled by histidine 825. A glycan (N-linked (GlcNAc...) asparagine) is linked at asparagine 848. The active-site Charge relay system is the aspartate 876. N-linked (GlcNAc...) asparagine glycosylation is found at asparagine 887, asparagine 909, and asparagine 949. Disulfide bonds link cysteine 910/cysteine 977, cysteine 941/cysteine 956, and cysteine 967/cysteine 995. Catalysis depends on serine 971, which acts as the Charge relay system.

It belongs to the peptidase S1 family. In terms of assembly, heterodimer of a catalytic (light) chain and a multidomain (heavy) chain linked by a disulfide bond. Post-translationally, the chains are derived from a single precursor that is cleaved by a trypsin-like protease. Intestinal brush border.

The protein resides in the membrane. It carries out the reaction Activation of trypsinogen by selective cleavage of 6-Lys-|-Ile-7 bond.. In terms of biological role, responsible for initiating activation of pancreatic proteolytic proenzymes (trypsin, chymotrypsin and carboxypeptidase A). It catalyzes the conversion of trypsinogen to trypsin which in turn activates other proenzymes including chymotrypsinogen, procarboxypeptidases, and proelastases. The sequence is that of Enteropeptidase (TMPRSS15) from Homo sapiens (Human).